Consider the following 149-residue polypeptide: Nucleoside diphosphate kinase (149 aa).

Lysine 9, phenylalanine 57, arginine 85, threonine 91, arginine 102, and asparagine 112 together coordinate ATP. Histidine 115 (pros-phosphohistidine intermediate) is an active-site residue.

This sequence belongs to the NDK family. As to quaternary structure, homotetramer. Requires Mg(2+) as cofactor.

The protein localises to the cytoplasm. The enzyme catalyses a 2'-deoxyribonucleoside 5'-diphosphate + ATP = a 2'-deoxyribonucleoside 5'-triphosphate + ADP. It carries out the reaction a ribonucleoside 5'-diphosphate + ATP = a ribonucleoside 5'-triphosphate + ADP. Major role in the synthesis of nucleoside triphosphates other than ATP. The ATP gamma phosphate is transferred to the NDP beta phosphate via a ping-pong mechanism, using a phosphorylated active-site intermediate. The polypeptide is Nucleoside diphosphate kinase (Cyanothece sp. (strain PCC 7425 / ATCC 29141)).